The sequence spans 298 residues: ATP phosphoribosyltransferase (298 aa).

The protein belongs to the ATP phosphoribosyltransferase family. Long subfamily. Mg(2+) serves as cofactor.

It is found in the cytoplasm. The enzyme catalyses 1-(5-phospho-beta-D-ribosyl)-ATP + diphosphate = 5-phospho-alpha-D-ribose 1-diphosphate + ATP. It functions in the pathway amino-acid biosynthesis; L-histidine biosynthesis; L-histidine from 5-phospho-alpha-D-ribose 1-diphosphate: step 1/9. Feedback inhibited by histidine. Functionally, catalyzes the condensation of ATP and 5-phosphoribose 1-diphosphate to form N'-(5'-phosphoribosyl)-ATP (PR-ATP). Has a crucial role in the pathway because the rate of histidine biosynthesis seems to be controlled primarily by regulation of HisG enzymatic activity. The sequence is that of ATP phosphoribosyltransferase from Psychromonas ingrahamii (strain DSM 17664 / CCUG 51855 / 37).